Here is a 208-residue protein sequence, read N- to C-terminus: UPF0316 protein SERP1448 (208 aa).

The next 3 helical transmembrane spans lie at 8-28 (PWLM…FLTM), 40-60 (VAAV…GLVM), and 66-86 (IQNI…GMKI).

The protein belongs to the UPF0316 family.

The protein localises to the cell membrane. This is UPF0316 protein SERP1448 from Staphylococcus epidermidis (strain ATCC 35984 / DSM 28319 / BCRC 17069 / CCUG 31568 / BM 3577 / RP62A).